The following is a 251-amino-acid chain: UstYa family oxidase phomYb (251 aa).

Residues 1–47 (MDGYSSKKPRSASPSRSSLTEVEEEERDTLLKTVSLEEEDKSGENGP) form a disordered region. Residues 58 to 78 (AIGILMLSNIAFIAAFLTVFV) traverse the membrane as a helical segment. Asn135 is a glycosylation site (N-linked (GlcNAc...) asparagine). 2 short sequence motifs (HXXHC) span residues 160–164 (HQLHC) and 187–191 (HVSHC).

Belongs to the ustYa family.

The protein resides in the membrane. It participates in mycotoxin biosynthesis. Its function is as follows. UstYa family oxidase; part of the gene cluster that mediates the biosynthesis of the phomopsins, a group of hexapeptide mycotoxins which infects lupins and causes lupinosis disease in livestock. Within the pathway, phomYb is probably involved in the construction of the macrocyclic structure of the phomopsins. The pathway starts with the processing of the precursor phomA by several endopeptidases including kexin proteases as well as the cluster-specific S41 family peptidase phomP1 and the oligopeptidase phomG to produce 10 identical copies of the hexapeptide Tyr-Val-Ile-Pro-Ile-Asp. After being excised from the precursor peptide, the core peptides are cyclized and modified post-translationally by enzymes encoded within the gene cluster. The timing and order of proteolysis of the phomA precursor and PTMs are still unknown. Two tyrosinase-like enzymes, phomQ1 and phomQ2, catalyze the chlorination and hydroxylation of Tyr, respectively. PhomYb, is proposed to be involved in the construction of the macrocyclic structure. The other 4 ustYa family proteins may be involved in PTMs that generate the unique structure of phomopsin A. PhomYa is required for the hydroxylation of C-beta of Tyr. PhomYc, phomYd, and phomYe are responsible for the biosynthesis of 2,3-dehydroisoleucine (dIle), 2,3-dehydroaspartic acid (dAsp), and 3,4-dehydroproline (dPro), respectively. While dIle formation by phomYc is indispensable for the installation of dAsp by phomYd, the order of the other PTMs have not been elucidated yet. Most of the biosynthetic enzymes likely have broad substrate specificity, and thus, there might be a metabolic grid from a precursor to phomopsin A. The enzyme(s) responsible for the biosynthesis of 3,4-dehydrovaline (dVal) have also not been identified yet. Finally, phomM acts as an S-adenosylmethionine-dependent alpha-N-methyltransferase that catalyzes two successive N-methylation reactions, converting N-desmethyl-phomopsin A to phomopsin A and phomopsin A further to an N,N-dimethylated congener called phomopsin E. The polypeptide is UstYa family oxidase phomYb (Diaporthe leptostromiformis (Lupinosis disease fungus)).